A 102-amino-acid polypeptide reads, in one-letter code: Large ribosomal subunit protein uL24 (102 aa).

The protein belongs to the universal ribosomal protein uL24 family. In terms of assembly, part of the 50S ribosomal subunit.

One of two assembly initiator proteins, it binds directly to the 5'-end of the 23S rRNA, where it nucleates assembly of the 50S subunit. Its function is as follows. One of the proteins that surrounds the polypeptide exit tunnel on the outside of the subunit. The sequence is that of Large ribosomal subunit protein uL24 from Leuconostoc citreum (strain KM20).